The primary structure comprises 638 residues: Chaperone protein HtpG (638 aa).

The interval 1–344 (MQKKETLEFQ…SNDLPLNVSR (344 aa)) is a; substrate-binding. Residues 345 to 560 (EILQNNENIY…ENDITTQMSK (216 aa)) form a b region. A c region spans residues 561-638 (LLISTGQESP…LLLSNIIRLN (78 aa)).

It belongs to the heat shock protein 90 family. As to quaternary structure, homodimer.

It is found in the cytoplasm. Functionally, molecular chaperone. Has ATPase activity. The polypeptide is Chaperone protein HtpG (Wigglesworthia glossinidia brevipalpis).